A 179-amino-acid chain; its full sequence is MLSLEKGQSLSLTKPDGSSIQKVRVGLSWDVASIGSNVDLDLFVVHKESKKVAFFNDKTAISGIKLSDDNLTGEGEGDDEFTELDATKTDDGDYYICVNIYDAKSRKQAFNLVNNAKATIYNNETNTALASYSITEDGGQNTGIIVAKLKDVGGSYEFTALGEYIVGDINEIAQVVFRK.

The protein belongs to the CAPAB/TerDEXZ family.

This is an uncharacterized protein from Synechocystis sp. (strain ATCC 27184 / PCC 6803 / Kazusa).